The following is a 289-amino-acid chain: Ribosomal protein L11 methyltransferase (289 aa).

S-adenosyl-L-methionine contacts are provided by Thr135, Gly156, Asp179, and Asn225.

This sequence belongs to the methyltransferase superfamily. PrmA family.

It localises to the cytoplasm. The enzyme catalyses L-lysyl-[protein] + 3 S-adenosyl-L-methionine = N(6),N(6),N(6)-trimethyl-L-lysyl-[protein] + 3 S-adenosyl-L-homocysteine + 3 H(+). Its function is as follows. Methylates ribosomal protein L11. The chain is Ribosomal protein L11 methyltransferase from Chlorobaculum tepidum (strain ATCC 49652 / DSM 12025 / NBRC 103806 / TLS) (Chlorobium tepidum).